Reading from the N-terminus, the 421-residue chain is Subtilisin-like protease 2 (421 aa).

The first 16 residues, M1–G16, serve as a signal peptide directing secretion. Positions D17–A122 are excised as a propeptide. Residues Q36–A122 form the Inhibitor I9 domain. The 291-residue stretch at R131–F421 folds into the Peptidase S8 domain. Active-site charge relay system residues include D169 and H201. Residues N248, N261, and N348 are each glycosylated (N-linked (GlcNAc...) asparagine). Residue S357 is the Charge relay system of the active site. The N-linked (GlcNAc...) asparagine glycan is linked to N388.

The protein belongs to the peptidase S8 family.

The protein resides in the secreted. Its function is as follows. Secreted subtilisin-like serine protease with keratinolytic activity that contributes to pathogenicity. This chain is Subtilisin-like protease 2 (SUB2), found in Trichophyton tonsurans (Scalp ringworm fungus).